Reading from the N-terminus, the 227-residue chain is 7-cyano-7-deazaguanine synthase (227 aa).

An ATP-binding site is contributed by Leu9–Leu19. Cys189, Cys199, Cys202, and Cys205 together coordinate Zn(2+).

Belongs to the QueC family. Zn(2+) is required as a cofactor.

It catalyses the reaction 7-carboxy-7-deazaguanine + NH4(+) + ATP = 7-cyano-7-deazaguanine + ADP + phosphate + H2O + H(+). It functions in the pathway purine metabolism; 7-cyano-7-deazaguanine biosynthesis. In terms of biological role, catalyzes the ATP-dependent conversion of 7-carboxy-7-deazaguanine (CDG) to 7-cyano-7-deazaguanine (preQ(0)). The polypeptide is 7-cyano-7-deazaguanine synthase (Cupriavidus necator (strain ATCC 17699 / DSM 428 / KCTC 22496 / NCIMB 10442 / H16 / Stanier 337) (Ralstonia eutropha)).